We begin with the raw amino-acid sequence, 360 residues long: MSKCSRKKYIKTNLRQMTMDTMESQQDGSVTDSVAENESAHMQNQTGQNSIPTLTQVSVAGSGTGRGSPAVTLVQLPSGQTVHVQGIIQTPQPSVIQSPQIQTVQVATIAETDESAESEGVIDSHKRREILSRRPSYRKILNELSSDVPGVPKIEEEKSEEEGTPPNIATMAVPTSIYQTSTGQYIAIAQGGTIQISNPGSDGVQGLQALTMTNSGAPPPGATIVQYAAQSADGTQQFFVPGSQVVVQDEETELAPSHMAAATGDMPTYQIRAPTTALPQGVVMAASPGSLHSPQQLAEEATRKRELRLMKNREAARECRRKKKEYVKCLENRVAVLENQNKTLIEELKALKDLYCHKAE.

Residues 20–52 form a disordered region; sequence DTMESQQDGSVTDSVAENESAHMQNQTGQNSIP. A KID domain is found at 104-163; the sequence is VQVATIAETDESAESEGVIDSHKRREILSRRPSYRKILNELSSDVPGVPKIEEEKSEEEG. Residues Ser118, Ser145, Ser287, Ser290, and Ser293 each carry the phosphoserine modification. The bZIP domain maps to 302 to 360; the sequence is TRKRELRLMKNREAARECRRKKKEYVKCLENRVAVLENQNKTLIEELKALKDLYCHKAE. Residues 303–328 form a basic motif region; that stretch reads RKRELRLMKNREAARECRRKKKEYVK. Residues 330–351 are leucine-zipper; that stretch reads LENRVAVLENQNKTLIEELKAL.

This sequence belongs to the bZIP family. Binds DNA as a dimer. Interacts with FHL5. Interacts with CDC34. May interact with TSSK4. Post-translationally, stimulated by phosphorylation. Phosphorylated on Ser-118 by TSSK4 in vitro.

It localises to the nucleus. In terms of biological role, transcriptional regulator that binds the cAMP response element (CRE), a sequence present in many viral and cellular promoters. Isoforms are either transcriptional activators or repressors. Isoform Tau is a transcriptional activator. Plays a role in spermatogenesis and is involved in spermatid maturation. In Canis lupus familiaris (Dog), this protein is cAMP-responsive element modulator (CREM).